The sequence spans 227 residues: Cleavage and polyadenylation specificity factor subunit 5 (227 aa).

S2 carries the post-translational modification N-acetylserine. The necessary for RNA-binding stretch occupies residues 2–147 (SVVPPNRSQT…DWVIDDCIGN (146 aa)). An Omega-N-methylarginine modification is found at R15. An N6-acetyllysine mark is found at K23 and K29. Y40 bears the Phosphotyrosine mark. At K56 the chain carries N6-acetyllysine. Positions 76-201 (MRRTVEGVLI…KLVAAPLFEL (126 aa)) constitute a Nudix hydrolase domain. Residues 81-160 (EGVLIVHEHR…PNFEPPQYPY (80 aa)) form a necessary for interactions with PAPOLA and PABPN1 region. The segment at 102–104 (TFF) is interaction with RNA. The Nudix box motif lies at 109–130 (GELNPGEDEVEGLKRLMTEILG).

The protein belongs to the Nudix hydrolase family. CPSF5 subfamily. In terms of assembly, homodimer (via N- and C-terminus); binds RNA as homodimer. Component of the cleavage factor Im (CFIm) complex which is a heterotetramer composed of two subunits of NUDT21/CPSF5 and two subunits of CPSF6 or CPSF7 or a heterodimer of CPSF6 and CPSF7. The cleavage factor Im (CFIm) complex associates with the CPSF and CSTF complexes to promote the assembly of the core mRNA 3'-processing machinery. Interacts with CPSF6 (via the RRM domain); this interaction is direct and enhances binding to RNA. Interacts with CPSF7. Interacts with FIP1L1; this interaction occurs in a RNA sequence-specific manner. Interacts with PABPN1. Interacts (via N-terminus) with PAPOLA (via C-terminus); this interaction is direct and diminished by acetylation. Interacts with SNRNP70. Interacts with VIRMA. Acetylated mainly by p300/CBP, recruited to the complex by CPSF6. Acetylation decreases interaction with PAPAO. Deacetylated by the class I/II HDACs, HDAC1, HDAC3 and HDAC10, and by the class III HDACs, SIRT1 and SIRT2. As to expression, expressed in testis. Expressed in male germ cells (at protein level).

It localises to the nucleus. The protein resides in the cytoplasm. Functionally, component of the cleavage factor Im (CFIm) complex that functions as an activator of the pre-mRNA 3'-end cleavage and polyadenylation processing required for the maturation of pre-mRNA into functional mRNAs. CFIm contributes to the recruitment of multiprotein complexes on specific sequences on the pre-mRNA 3'-end, so called cleavage and polyadenylation signals (pA signals). Most pre-mRNAs contain multiple pA signals, resulting in alternative cleavage and polyadenylation (APA) producing mRNAs with variable 3'-end formation. The CFIm complex acts as a key regulator of cleavage and polyadenylation site choice during APA through its binding to 5'-UGUA-3' elements localized in the 3'-untranslated region (UTR) for a huge number of pre-mRNAs. NUDT21/CPSF5 activates indirectly the mRNA 3'-processing machinery by recruiting CPSF6 and/or CPSF7. Binds to 5'-UGUA-3' elements localized upstream of pA signals that act as enhancers of pre-mRNA 3'-end processing. The homodimer mediates simultaneous sequence-specific recognition of two 5'-UGUA-3' elements within the pre-mRNA. Plays a role in somatic cell fate transitions and pluripotency by regulating widespread changes in gene expression through an APA-dependent function. Binds to chromatin. Binds to, but does not hydrolyze mono- and di-adenosine nucleotides. The protein is Cleavage and polyadenylation specificity factor subunit 5 of Mus musculus (Mouse).